The primary structure comprises 217 residues: Large ribosomal subunit protein uL3 (217 aa).

The disordered stretch occupies residues 137-160; the sequence is VSASHGSHRNHRKPGSIGASSTPS.

It belongs to the universal ribosomal protein uL3 family. Part of the 50S ribosomal subunit. Forms a cluster with proteins L14 and L19.

Functionally, one of the primary rRNA binding proteins, it binds directly near the 3'-end of the 23S rRNA, where it nucleates assembly of the 50S subunit. In Clavibacter michiganensis subsp. michiganensis (strain NCPPB 382), this protein is Large ribosomal subunit protein uL3.